The primary structure comprises 326 residues: Tagatose 1,6-diphosphate aldolase (326 aa).

The protein belongs to the aldolase LacD family.

It catalyses the reaction D-tagatofuranose 1,6-bisphosphate = D-glyceraldehyde 3-phosphate + dihydroxyacetone phosphate. Its pathway is carbohydrate metabolism; D-tagatose 6-phosphate degradation; D-glyceraldehyde 3-phosphate and glycerone phosphate from D-tagatose 6-phosphate: step 2/2. The polypeptide is Tagatose 1,6-diphosphate aldolase (Staphylococcus aureus (strain Mu3 / ATCC 700698)).